Here is a 1528-residue protein sequence, read N- to C-terminus: Intraflagellar transport protein 121 (1528 aa).

4 WD repeats span residues 123–170 (SNRA…GSAP), 244–285 (SSMP…SSVS), 619–667 (PSLT…SEFL), and 759–798 (PELIGIWGLVFSPEDPNLVAVSSQYKVIVFHLDTQTREDS). Residues 914–933 (DSGLDVTASNSSQPSTQTSQ) form a disordered region. Low complexity predominate over residues 920–933 (TASNSSQPSTQTSQ).

The protein localises to the cell projection. The protein resides in the cilium. Its subcellular location is the flagellum. It localises to the cytoplasm. It is found in the cytoskeleton. The protein localises to the flagellum axoneme. The protein resides in the flagellum basal body. Functionally, component of the intraflagellar transport complex A (IFT-A) involved in flagellar assembly. This is Intraflagellar transport protein 121 from Giardia intestinalis (strain ATCC 50803 / WB clone C6) (Giardia lamblia).